The primary structure comprises 1402 residues: MNQEVMNLFNPQVPAQNFDSIRISIASPEKILSWSYGEIKKPETINYRTFKPERDGLFCARIFGPIKDYECLCGKYKRMKYKGIICEKCGVEVTLSRVRRERMGHIELAAPVAHIWFLKSLPSRISTLLDMTLKDVERVLYFENYIVTEPGLTALKEHQLLSEEEYMLAVDEYGEDQFTAMIGAEAIYEMLASMNLEKIAGDLRAELADTTSDLKQKKLMKRLKIVENFMESGNRPEWMIMKVVPVIPPDLRPLVPLDGGRFATSDLNDLYRRVINRNNRLKRLIELRAPGIIIRNEKRMLQESVDALFDNGRRGRVITGANKRPLKSLSDMLKGKQGRFRQNLLGKRVDYSGRSVIVTGPELKLHQCGLPKKMALELFKPFIYARLDAKGYSSTVKQAKKLVEKEKPEVWDILDEVIREHPVLLNRAPTLHRLGIQAFEPILVEGKAIQLHPLVCTAFNADFDGDQMAVHVPLSLEAQLEARVLMMSTNNILHPANGAPIIVPSQDMVLGLYYLSILNQNEPGEGMAFSDLGELHHALESKVVTLHTKIRGRFKSVDEDGKPYSKIYETTPGRLLIGELLPKNGKVPFDICNQEMTKKNISKMIDTVYRHCGQKDTVIFCDRIMQLGFAHACRAGISFGKDDMVIPDAKAKIVADTENLVKEYEQQYNDGLITQGEKYNKVVDAWGKATEKVAEEMMARIKAVEFDEKTGRQKPMNSIYMMSHSGARGSPNQMRQLGGMRGLMAKPSGEIIETPIISNFKEGLTVNEYFNSTHGARKGLADTALKTANSGYLTRRLVDVAQDCIVTHVDCGTQTGLTMTAIVDAGQVVASIGARILGRTALDDIDHPVTGERIVDAGKMILEPDVVEIEKAGIQSIRIRSALTCEIQTGVCSVCYGRDLARGTPVNMGEAVGVIAAQSIGEPGTQLTMRTFHLGGTATVVDQSFLEASYEGTVQIKNRNILRNSDGNLVAMGRNMTVQILDERGVERSSQRVAYGSKLHVDEGDKVKRGQRLAEWDPYTRPMMTEVAGTVQFEDLVDGLSVLEATDESTGITKRQVIDWRSTPRGSDLKPAIVIKDASGNIAKLSRGGDARFFLSVDAILSVEPGTKVSQGDVLARSPLESAKTKDITGGLPRVAELFEARRPKDHAIIAEIDGTIRLGRDYKNKRRVIIEPAEDGVEPVEYLIPKGKPFHLQEGDYIEKGDYILDGNPAPHDILAIKGVEALASYLVNEIQEVYRLQGVVINDKHIEVIVRQMLQKVEITDAGDSTYIVGDNVDRIELEDVNDHLIEQGKKPAYGDPVLLGITKASLQTPSFISAASFQETTKVLTEAAIAGKTDGLQGLKENVIVGRLIPAGTGGTMTQIRRIATSRDEMILEERRKGTGAAVATPMLQDMAEKAPAAE.

Zn(2+) contacts are provided by Cys-71, Cys-73, Cys-86, and Cys-89. Mg(2+) is bound by residues Asp-462, Asp-464, and Asp-466. Residues Cys-811, Cys-885, Cys-892, and Cys-895 each contribute to the Zn(2+) site.

The protein belongs to the RNA polymerase beta' chain family. In terms of assembly, the RNAP catalytic core consists of 2 alpha, 1 beta, 1 beta' and 1 omega subunit. When a sigma factor is associated with the core the holoenzyme is formed, which can initiate transcription. Mg(2+) serves as cofactor. It depends on Zn(2+) as a cofactor.

It catalyses the reaction RNA(n) + a ribonucleoside 5'-triphosphate = RNA(n+1) + diphosphate. DNA-dependent RNA polymerase catalyzes the transcription of DNA into RNA using the four ribonucleoside triphosphates as substrates. This chain is DNA-directed RNA polymerase subunit beta', found in Rhizobium johnstonii (strain DSM 114642 / LMG 32736 / 3841) (Rhizobium leguminosarum bv. viciae).